A 158-amino-acid chain; its full sequence is C-type lectin lectoxin-Enh4 (158 aa).

The signal sequence occupies residues 1-23 (MGQFTVVSLGLLAMFLSLSGAKG). Disulfide bonds link Cys-26/Cys-37, Cys-54/Cys-154, and Cys-129/Cys-146. In terms of domain architecture, C-type lectin spans 33-155 (RNGVCNKLFP…CASLHPFICQ (123 aa)). Positions 119–121 (EPN) match the Mannose-binding motif. Ca(2+) is bound by residues Glu-127, Asn-142, and Asp-143.

The protein belongs to the true venom lectin family. Expressed by the venom gland.

It localises to the secreted. In terms of biological role, mannose-binding lectin which recognizes specific carbohydrate structures and agglutinates a variety of animal cells by binding to cell-surface glycoproteins and glycolipids. May be a calcium-dependent lectin. The chain is C-type lectin lectoxin-Enh4 from Pseudoferania polylepis (Macleay's water snake).